We begin with the raw amino-acid sequence, 807 residues long: Anaphase-promoting complex subunit 4 (807 aa).

A Phosphotyrosine modification is found at tyrosine 469. The tract at residues 755 to 788 is disordered; the sequence is DESSDDEEEAGGKPVKIKEEVLSESETEAHQDAA. A phosphoserine mark is found at serine 757 and serine 758. A compositionally biased stretch (basic and acidic residues) spans 770-785; the sequence is KIKEEVLSESETEAHQ. Residue lysine 772 forms a Glycyl lysine isopeptide (Lys-Gly) (interchain with G-Cter in SUMO2) linkage. 2 positions are modified to phosphoserine: serine 777 and serine 779. Lysine 797 participates in a covalent cross-link: Glycyl lysine isopeptide (Lys-Gly) (interchain with G-Cter in SUMO2).

It belongs to the APC4 family. As to quaternary structure, the mammalian APC/C is composed at least of 14 distinct subunits ANAPC1, ANAPC2, CDC27/APC3, ANAPC4, ANAPC5, CDC16/APC6, ANAPC7, CDC23/APC8, ANAPC10, ANAPC11, CDC26/APC12, ANAPC13, ANAPC15 and ANAPC16 that assemble into a complex of at least 19 chains with a combined molecular mass of around 1.2 MDa; APC/C interacts with FZR1 and FBXO5. In the context of the APC/C complex, directly interacts with UBE2S. Interacts with FBXO43.

The protein localises to the nucleus. Its pathway is protein modification; protein ubiquitination. Its function is as follows. Component of the anaphase promoting complex/cyclosome (APC/C), a cell cycle-regulated E3 ubiquitin ligase that controls progression through mitosis and the G1 phase of the cell cycle. The APC/C complex acts by mediating ubiquitination and subsequent degradation of target proteins: it mainly mediates the formation of 'Lys-11'-linked polyubiquitin chains and, to a lower extent, the formation of 'Lys-48'- and 'Lys-63'-linked polyubiquitin chains. The APC/C complex catalyzes assembly of branched 'Lys-11'-/'Lys-48'-linked branched ubiquitin chains on target proteins. In Mus musculus (Mouse), this protein is Anaphase-promoting complex subunit 4 (Anapc4).